The sequence spans 558 residues: uncharacterized protein (558 aa).

Residues 396–420 (SSITDNDTDNDSGATESQQTDSEND) form a disordered region. Polar residues predominate over residues 407–416 (SGATESQQTD).

It belongs to the chlamydial CPn_0065/CT_288/TC_0561 family.

This is an uncharacterized protein from Chlamydia muridarum (strain MoPn / Nigg).